We begin with the raw amino-acid sequence, 456 residues long: UDP-N-acetylmuramate--L-alanine ligase (456 aa).

114-120 (GTHGKTT) lines the ATP pocket.

This sequence belongs to the MurCDEF family.

It localises to the cytoplasm. The catalysed reaction is UDP-N-acetyl-alpha-D-muramate + L-alanine + ATP = UDP-N-acetyl-alpha-D-muramoyl-L-alanine + ADP + phosphate + H(+). Its pathway is cell wall biogenesis; peptidoglycan biosynthesis. Cell wall formation. This is UDP-N-acetylmuramate--L-alanine ligase from Porphyromonas gingivalis (strain ATCC 33277 / DSM 20709 / CIP 103683 / JCM 12257 / NCTC 11834 / 2561).